The chain runs to 452 residues: Growth/differentiation factor 6 (452 aa).

Residues 1–22 form the signal peptide; it reads MDTPRVLLWAIFLISFLWDLPG. A propeptide spanning residues 23 to 332 is cleaved from the precursor; that stretch reads FQQASISSSS…LPSPGRRRRR (310 aa). The disordered stretch occupies residues 29–93; it reads SSSSSTELDS…QEPPGRGPRV (65 aa). Basic and acidic residues-rich tracts occupy residues 37 to 46 and 58 to 75; these read DSTKDVENRK and AEGR…ELRR. Asn115 carries an N-linked (GlcNAc...) asparagine glycan. Disordered stretches follow at residues 244–267 and 301–348; these read RDSG…LGFG and AEAA…KKSR. Residues 301–317 are compositionally biased toward low complexity; sequence AEAAGAEGSWPAPSGAP. The span at 327 to 348 shows a compositional bias: basic residues; sequence GRRRRRTALSSRHGKRHGKKSR. 3 disulfide bridges follow: Cys351/Cys417, Cys380/Cys449, and Cys384/Cys451.

This sequence belongs to the TGF-beta family. Homodimer; disulfide-linked.

It is found in the secreted. Functionally, growth factor that controls proliferation and cellular differentiation in the retina and bone formation. Plays a key role in regulating apoptosis during retinal development. Establishes dorsal-ventral positional information in the retina and controls the formation of the retinotectal map. Required for normal formation of bones and joints in the limbs, skull, digits and axial skeleton. Plays a key role in establishing boundaries between skeletal elements during development. Regulation of GDF6 expression seems to be a mechanism for evolving species-specific changes in skeletal structures. Seems to positively regulate differentiation of chondrogenic tissue through the growth factor receptors subunits BMPR1A, BMPR1B, BMPR2 and ACVR2A, leading to the activation of SMAD1-SMAD5-SMAD8 complex. The regulation of chondrogenic differentiation is inhibited by NOG. Also involved in the induction of adipogenesis from mesenchymal stem cells. This mechanism acts through the growth factor receptors subunits BMPR1A, BMPR2 and ACVR2A and the activation of SMAD1-SMAD5-SMAD8 complex and MAPK14/p38. This chain is Growth/differentiation factor 6 (Gdf6), found in Rattus norvegicus (Rat).